Reading from the N-terminus, the 370-residue chain is MTEFIPPGTRFHALPSPFPFKRGGALHGARVAYETWGTLAADASNAILIVTGLSPDAHAAANDANPAAGWWEGMVGPGKAIDTDRWFVVCVNSLGSCRGSTGPASLNPATGQPYRLDFPELSIEDGARAAIEVVRAQGIEQLACVVGNSMGGMTALAVLMLHPGIARSHVNISGSAQALPFSIAIRSLQREAIRLDPRWNGGHYDDDAYPESGMRMARKLGVITYRSALEWDGRFGRVRLDSDQTDDDPFGLEFQVESYLEGHARRFVRFFDPNCYLYLSRSMDWFDLAEYADGDVLAGLAKIRVEKALAIGANTDILFPVQQQQQVADGLRAGGADARFIGLESPQGHDAFLVDFERFCPAVRGFLDAL.

In terms of domain architecture, AB hydrolase-1 spans 46–355 (AILIVTGLSP…PQGHDAFLVD (310 aa)). The segment at 52-55 (GLSP) is important for substrate specificity. The active-site Nucleophile is the Ser149. Arg218 lines the substrate pocket. Residues Asp316 and His349 contribute to the active site. Residue Asp350 participates in substrate binding.

This sequence belongs to the AB hydrolase superfamily. MetX family. As to quaternary structure, homodimer.

The protein localises to the cytoplasm. The enzyme catalyses succinyl-CoA + L-serine = O-succinyl-L-serine + CoA. The catalysed reaction is L-homoserine + succinyl-CoA = O-succinyl-L-homoserine + CoA. It participates in amino-acid biosynthesis; L-cysteine biosynthesis; L-cysteine from L-serine: step 1/2. Transfers a succinyl group from succinyl-CoA to L-serine, forming succinyl-L-serine. In vitro, also has homoserine succinyl transferase activity. This chain is Serine O-succinyltransferase, found in Stenotrophomonas maltophilia (Pseudomonas maltophilia).